The following is a 440-amino-acid chain: Beta-1,3-galactosyl-O-glycosyl-glycoprotein beta-1,6-N-acetylglucosaminyltransferase (440 aa).

Over 1 to 12 (MKMAGWKKKLCR) the chain is Cytoplasmic. A helical; Signal-anchor for type II membrane protein membrane pass occupies residues 13–30 (GHHLWALGCYMLLAVVSL). Topologically, residues 31-440 (RLSLRFKCDV…RHKAIYGTEL (410 aa)) are lumenal. N-linked (GlcNAc...) asparagine; by host glycosylation is found at Asn72 and Asn108. Cystine bridges form between Cys73/Cys230, Cys164/Cys384, Cys185/Cys212, and Cys393/Cys425.

Belongs to the glycosyltransferase 14 family.

Its subcellular location is the host Golgi apparatus membrane. The catalysed reaction is a 3-O-[beta-D-galactosyl-(1-&gt;3)-N-acetyl-alpha-D-galactosaminyl]-L-seryl-[protein] + UDP-N-acetyl-alpha-D-glucosamine = 3-O-{beta-D-galactosyl-(1-&gt;3)-[N-acetyl-beta-D-glucosaminyl-(1-&gt;6)]-N-acetyl-alpha-D-galactosaminyl}-L-seryl-[protein] + UDP + H(+). It catalyses the reaction a 3-O-[beta-D-galactosyl-(1-&gt;3)-N-acetyl-alpha-D-galactosaminyl]-L-threonyl-[protein] + UDP-N-acetyl-alpha-D-glucosamine = a 3-O-{beta-D-galactosyl-(1-&gt;3)-[N-acetyl-beta-D-glucosaminyl-(1-&gt;6)]-N-acetyl-alpha-D-galactosaminyl}-L-threonyl-[protein] + UDP + H(+). The enzyme catalyses a beta-D-Gal-(1-&gt;4)-beta-D-GlcNAc-(1-&gt;3)-beta-D-Gal-(1-&gt;4)-beta-D-GlcNAc derivative + UDP-N-acetyl-alpha-D-glucosamine = a beta-D-Gal-(1-&gt;4)-beta-D-GlcNAc-(1-&gt;3)-[beta-D-GlcNAc-(1-&gt;6)]-beta-D-Gal-(1-&gt;4)-N-acetyl-beta-D-glucosaminyl derivative + UDP + H(+). It carries out the reaction 3-O-[N-acetyl-beta-D-glucosaminyl-(1-&gt;3)-N-acetyl-alpha-D-galactosaminyl]-L-seryl-[protein] + UDP-N-acetyl-alpha-D-glucosamine = 3-O-[N-acetyl-beta-D-glucosaminyl-(1-&gt;3)-[N-acetyl-beta-D-glucosaminyl-(1-&gt;6)]-N-acetyl-alpha-D-galactosaminyl]-L-seryl-[protein] + UDP + H(+). The catalysed reaction is a 3-O-[N-acetyl-beta-D-glucosaminyl-(1-&gt;3)-N-acetyl-alpha-D-galactosaminyl]-L-threonyl-[protein] + UDP-N-acetyl-alpha-D-glucosamine = 3-O-[N-acetyl-beta-D-glucosaminyl-(1-&gt;3)-[N-acetyl-beta-D-glucosaminyl-(1-&gt;6)]-N-acetyl-alpha-D-galactosaminyl]-L-threonyl-[protein] + UDP + H(+). It functions in the pathway protein modification; protein glycosylation. Functionally, non-essential glycosyltransferase that can synthesize all known mucin beta 6 N-acetylglucosaminides. Mediates core 2 and core 4 O-glycan branching, 2 important steps in mucin-type biosynthesis. Has also I-branching enzyme activity by converting linear into branched poly-N-acetyllactosaminoglycans. Contributes to the post-translational modifications of structural proteins. The polypeptide is Beta-1,3-galactosyl-O-glycosyl-glycoprotein beta-1,6-N-acetylglucosaminyltransferase (Bo17) (Bos taurus (Bovine)).